The following is a 93-amino-acid chain: Large ribosomal subunit protein uL23cz/uL23cy (93 aa).

It belongs to the universal ribosomal protein uL23 family. Part of the 50S ribosomal subunit.

It is found in the plastid. It localises to the chloroplast. Its function is as follows. Binds to 23S rRNA. The chain is Large ribosomal subunit protein uL23cz/uL23cy (rpl23-A) from Panax ginseng (Korean ginseng).